The chain runs to 504 residues: Maturase K (504 aa).

This sequence belongs to the intron maturase 2 family. MatK subfamily.

Its subcellular location is the plastid. The protein localises to the chloroplast. In terms of biological role, usually encoded in the trnK tRNA gene intron. Probably assists in splicing its own and other chloroplast group II introns. This chain is Maturase K, found in Fagus hayatae (Formosan elm).